A 334-amino-acid polypeptide reads, in one-letter code: Type IV inositol polyphosphate 5-phosphatase 11 (334 aa).

2 catalytic regions span residues 206–222 and 282–297; these read DLTVWLGDLNYRIQDVS and KIRVPAWTDRILFKIQ.

The protein belongs to the inositol polyphosphate 5-phosphatase family. As to expression, expressed ubiquitously.

Its subcellular location is the cell membrane. It catalyses the reaction a 1,2-diacyl-sn-glycero-3-phospho-(1D-myo-inositol-4,5-bisphosphate) + H2O = a 1,2-diacyl-sn-glycero-3-phospho-(1D-myo-inositol 4-phosphate) + phosphate. The catalysed reaction is a 1,2-diacyl-sn-glycero-3-phospho-(1D-myo-inositol-3,4,5-trisphosphate) + H2O = a 1,2-diacyl-sn-glycero-3-phospho-(1D-myo-inositol-3,4-bisphosphate) + phosphate. Has phosphatase activity toward PtdIns(4,5)P2, and in vitro toward PtdIns(3,5)P2 and PtdIns(3,4,5)P3. Cannot dephosphorylate PtdIns(5)P, Ins(1,4,5)P3 and Ins(1,3,4,5)P4. The polypeptide is Type IV inositol polyphosphate 5-phosphatase 11 (Arabidopsis thaliana (Mouse-ear cress)).